We begin with the raw amino-acid sequence, 216 residues long: Deoxyribose-phosphate aldolase (216 aa).

Asp89 acts as the Proton donor/acceptor in catalysis. Lys152 functions as the Schiff-base intermediate with acetaldehyde in the catalytic mechanism. Lys181 functions as the Proton donor/acceptor in the catalytic mechanism.

The protein belongs to the DeoC/FbaB aldolase family. DeoC type 1 subfamily.

It localises to the cytoplasm. The catalysed reaction is 2-deoxy-D-ribose 5-phosphate = D-glyceraldehyde 3-phosphate + acetaldehyde. Its pathway is carbohydrate degradation; 2-deoxy-D-ribose 1-phosphate degradation; D-glyceraldehyde 3-phosphate and acetaldehyde from 2-deoxy-alpha-D-ribose 1-phosphate: step 2/2. Functionally, catalyzes a reversible aldol reaction between acetaldehyde and D-glyceraldehyde 3-phosphate to generate 2-deoxy-D-ribose 5-phosphate. The protein is Deoxyribose-phosphate aldolase of Clostridium tetani (strain Massachusetts / E88).